The sequence spans 484 residues: Mitogen-activated protein kinase SLT2/MPK1 (484 aa).

One can recognise a Protein kinase domain in the interval 23–318 (FQLIKEIGHG…VDEALEHPYL (296 aa)). ATP contacts are provided by residues 29–37 (IGHGAYGIV) and Lys-54. The active-site Proton acceptor is Asp-153. At Thr-190 the chain carries Phosphothreonine. Residues 190–192 (TEY) carry the TXY motif. A Phosphotyrosine modification is found at Tyr-192. Low complexity predominate over residues 383–392 (QQQQQQQQQP). Disordered regions lie at residues 383–403 (QQQQQQQQQPSDVDNGNAAAS) and 426–464 (IHSQNLPRHDADFPPRPQESMMEMRPATGNTADIPPQND).

The protein belongs to the protein kinase superfamily. CMGC Ser/Thr protein kinase family. MAP kinase subfamily. In terms of assembly, interacts with RLM1. Requires Mg(2+) as cofactor. Post-translationally, dually phosphorylated on Thr-190 and Tyr-192, which activates the enzyme.

It catalyses the reaction L-seryl-[protein] + ATP = O-phospho-L-seryl-[protein] + ADP + H(+). The catalysed reaction is L-threonyl-[protein] + ATP = O-phospho-L-threonyl-[protein] + ADP + H(+). Activated by tyrosine and threonine phosphorylation by MKK1 and MKK2. In terms of biological role, serine/threonine protein kinase involved in a signal transduction pathway that plays a role in yeast cell morphogenesis and cell growth. This pathway seems to start by SMP3; then involve the kinase PKC1 that may act the BCK1 kinase that then phosphorylates MKK1 and MKK2 which themselves phosphorylate the SLT2/MPK1 kinase which itself then phosphorylates and activates the transcription factor RLM1. Directly phosphorylates BCY1 upon TOR complex 1 (TORC1) inhibition. The protein is Mitogen-activated protein kinase SLT2/MPK1 (SLT2) of Saccharomyces cerevisiae (strain ATCC 204508 / S288c) (Baker's yeast).